The primary structure comprises 135 residues: Small ribosomal subunit protein uS11 (135 aa).

Belongs to the universal ribosomal protein uS11 family. Part of the 30S ribosomal subunit. Interacts with proteins S7 and S18. Binds to IF-3.

In terms of biological role, located on the platform of the 30S subunit, it bridges several disparate RNA helices of the 16S rRNA. Forms part of the Shine-Dalgarno cleft in the 70S ribosome. The sequence is that of Small ribosomal subunit protein uS11 from Protochlamydia amoebophila (strain UWE25).